The following is a 185-amino-acid chain: Elongation factor P (185 aa).

It belongs to the elongation factor P family.

The protein localises to the cytoplasm. Its pathway is protein biosynthesis; polypeptide chain elongation. Involved in peptide bond synthesis. Stimulates efficient translation and peptide-bond synthesis on native or reconstituted 70S ribosomes in vitro. Probably functions indirectly by altering the affinity of the ribosome for aminoacyl-tRNA, thus increasing their reactivity as acceptors for peptidyl transferase. This chain is Elongation factor P, found in Gloeothece citriformis (strain PCC 7424) (Cyanothece sp. (strain PCC 7424)).